Here is a 789-residue protein sequence, read N- to C-terminus: Spermatogenesis-associated protein 20 (789 aa).

Residues 1 to 19 (MSHHSPPPPKHKGEHKGHG) show a composition bias toward basic residues. The segment at 1-65 (MSHHSPPPPK…CPPPAPQKTA (65 aa)) is disordered. 2 positions are modified to phosphoserine: Ser-5 and Ser-652.

In terms of tissue distribution, testis-specific and age-dependent (at protein level). Highly expressed. Expressed in round spermatids located in the inner half-layer of the seminiferous epithelium as well as in early elongated spermatids having cytoplasmic protrusions into the tubular lumen.

Its subcellular location is the secreted. Functionally, may play a role in fertility regulation. This is Spermatogenesis-associated protein 20 (Spata20) from Rattus norvegicus (Rat).